Here is a 230-residue protein sequence, read N- to C-terminus: MARHLPATAFRKRRSALSHAQRQTWERLWPEIGISAVSQTRSAERLDTGAWFGRSTLVVLEVGCGSGTATLAMAQHEPDIDVIAVEVYRRGLAQLLCAIDRDQVHNIRMIHGNALYVLQYLIAPRSLTGVRVFFPDPWPKVRHHKRRFLQPATVELIADRLLPGGVLHTATDHPDYAKQIAKFGDGEPLLSRADGRTQLPISTVRPTTKYETKAQHAGNVVTELIWKKRS.

Glu61, Glu86, Asn113, and Asp136 together coordinate S-adenosyl-L-methionine. Asp136 is an active-site residue. Residues Lys140, Asp172, and 208–211 contribute to the substrate site; that span reads TKYE.

This sequence belongs to the class I-like SAM-binding methyltransferase superfamily. TrmB family.

The catalysed reaction is guanosine(46) in tRNA + S-adenosyl-L-methionine = N(7)-methylguanosine(46) in tRNA + S-adenosyl-L-homocysteine. It functions in the pathway tRNA modification; N(7)-methylguanine-tRNA biosynthesis. Functionally, catalyzes the formation of N(7)-methylguanine at position 46 (m7G46) in tRNA. This Mycobacterium leprae (strain Br4923) protein is tRNA (guanine-N(7)-)-methyltransferase.